A 349-amino-acid polypeptide reads, in one-letter code: AA9 family lytic polysaccharide monooxygenase A (349 aa).

The first 19 residues, 1–19 (MKSTFGLLALAAAAKLVSA), serve as a signal peptide directing secretion. Cu(2+) contacts are provided by His-20 and His-102. Cys-62 and Cys-183 are joined by a disulfide. O2 is bound at residue His-169. Tyr-180 lines the Cu(2+) pocket. Residues 233-304 (DGSSSGSSGS…SGSNSGSDSC (72 aa)) form a disordered region. 2 stretches are compositionally biased toward low complexity: residues 234–262 (GSSS…AVPT) and 269–304 (TSAT…SDSC). A CBM1 domain is found at 311–347 (GSVKIYGQCGGQNYSGPTSCEAGLICKEWNPYYHQCV). The N-linked (GlcNAc...) asparagine glycan is linked to Asn-323.

This sequence belongs to the polysaccharide monooxygenase AA9 family. Cu(2+) is required as a cofactor.

The protein localises to the secreted. The enzyme catalyses [(1-&gt;4)-beta-D-glucosyl]n+m + reduced acceptor + O2 = 4-dehydro-beta-D-glucosyl-[(1-&gt;4)-beta-D-glucosyl]n-1 + [(1-&gt;4)-beta-D-glucosyl]m + acceptor + H2O.. Lytic polysaccharide monooxygenase (LPMO) that depolymerizes crystalline and amorphous polysaccharides via the oxidation of scissile alpha- or beta-(1-4)-glycosidic bonds, yielding C4 oxidation products. Catalysis by LPMOs requires the reduction of the active-site copper from Cu(II) to Cu(I) by a reducing agent and H(2)O(2) or O(2) as a cosubstrate. The protein is AA9 family lytic polysaccharide monooxygenase A (eglD) of Aspergillus fumigatus (strain CBS 144.89 / FGSC A1163 / CEA10) (Neosartorya fumigata).